A 388-amino-acid polypeptide reads, in one-letter code: G2/mitotic-specific cyclin-B (388 aa).

This sequence belongs to the cyclin family. Cyclin AB subfamily. As to quaternary structure, interacts with the CDK1 protein kinase to form a serine/threonine kinase holoenzyme complex also known as maturation promoting factor (MPF). The cyclin subunit imparts substrate specificity to the complex.

Essential for the control of the cell cycle at the G2/M (mitosis) transition. The chain is G2/mitotic-specific cyclin-B from Marthasterias glacialis (Spiny starfish).